The chain runs to 477 residues: Adenylyl cyclase-associated protein 2 (477 aa).

N-acetylalanine is present on Ala-2. 2 disordered regions span residues 225-261 (LSSG…PSRS) and 274-321 (TKGL…SQKH). Residues 230–246 (GLPPPPPPLPPPGPPPL) are compositionally biased toward pro residues. Residues 298-320 (QTQSPTKSHTPSPTSPKSYPSQK) are compositionally biased toward low complexity. A phosphoserine mark is found at Ser-301 and Ser-309. The C-CAP/cofactor C-like domain occupies 317-455 (PSQKHAPVLE…QDGDYREFPI (139 aa)).

This sequence belongs to the CAP family.

It is found in the cell membrane. In terms of biological role, involved in the regulation of actin polymerization. This chain is Adenylyl cyclase-associated protein 2 (CAP2), found in Homo sapiens (Human).